The sequence spans 204 residues: Large ribosomal subunit protein eL15 (204 aa).

The disordered stretch occupies residues 161-180; sequence MRGLTSAGKKSRGLGKGHKF. Over residues 169–180 the composition is skewed to basic residues; the sequence is KKSRGLGKGHKF.

It belongs to the eukaryotic ribosomal protein eL15 family. In terms of assembly, component of the large ribosomal subunit.

It localises to the cytoplasm. In terms of biological role, component of the large ribosomal subunit. The ribosome is a large ribonucleoprotein complex responsible for the synthesis of proteins in the cell. The chain is Large ribosomal subunit protein eL15 (rpl15) from Ictalurus punctatus (Channel catfish).